The primary structure comprises 139 residues: Large ribosomal subunit protein bL17 (139 aa).

It belongs to the bacterial ribosomal protein bL17 family. As to quaternary structure, part of the 50S ribosomal subunit. Contacts protein L32.

The chain is Large ribosomal subunit protein bL17 from Afipia carboxidovorans (strain ATCC 49405 / DSM 1227 / KCTC 32145 / OM5) (Oligotropha carboxidovorans).